Here is a 996-residue protein sequence, read N- to C-terminus: Low-density lipoprotein receptor-related protein 8 (996 aa).

The N-terminal stretch at 1 to 28 (MGRPELGALRPLALLLLLLLQLQHLSAA) is a signal peptide. The Extracellular portion of the chain corresponds to 29–858 (DPLPGGQGPV…GSQMGSTVTA (830 aa)). 8 consecutive LDL-receptor class A domains span residues 40 to 76 (ECEE…DDCP), 79 to 117 (TCAD…ATCS), 120 to 158 (ECPA…AGCP), 160 to 196 (LCAP…RGCS), 199 to 238 (ACPP…ELCG), 250 to 287 (ACAP…ADCS), 290 to 326 (PCRE…AGCL), and 330 to 369 (TCEG…KVCG). Cystine bridges form between Cys-41-Cys-53, Cys-48-Cys-66, Cys-60-Cys-75, Cys-80-Cys-92, Cys-87-Cys-105, Cys-99-Cys-116, Cys-121-Cys-135, Cys-128-Cys-148, Cys-142-Cys-157, Cys-161-Cys-173, Cys-168-Cys-186, Cys-180-Cys-195, Cys-200-Cys-213, Cys-207-Cys-226, Cys-220-Cys-237, Cys-251-Cys-264, Cys-259-Cys-277, Cys-271-Cys-286, Cys-291-Cys-303, Cys-298-Cys-316, Cys-310-Cys-325, Cys-331-Cys-344, Cys-339-Cys-357, Cys-351-Cys-368, Cys-373-Cys-384, Cys-380-Cys-393, Cys-395-Cys-407, Cys-413-Cys-423, Cys-419-Cys-432, and Cys-434-Cys-447. Residues Trp-58, Asp-61, Asp-63, Asp-65, Asp-71, and Glu-72 each contribute to the Ca(2+) site. Residue Asn-170 is glycosylated (N-linked (GlcNAc...) asparagine). Positions 364–408 (PQKVCGLNECLHNNGGCSHICTDLKIGFECTCPAGFQLLDQKTCG) constitute an EGF-like 1 domain. An EGF-like 2; calcium-binding domain is found at 409 to 448 (DIDECQDPDACSQICVNYKGYFKCECHPGYEMDTLTKNCK). 5 LDL-receptor class B repeats span residues 495 to 541 (NRIY…DWVH), 542 to 584 (KHIY…DPLR), 585 to 628 (GFMY…DLLS), 629 to 671 (QRLY…AVFE), and 672 to 714 (DKVF…FHEL). Residue Asn-551 is glycosylated (N-linked (GlcNAc...) asparagine). The tract at residues 773 to 831 (STSTTTLASAMTRTVPATTRAPGTTIHDPTYQNHSTETPSQTAAAPHSVNVPRAPSTSP) is clustered O-linked oligosaccharides. The tract at residues 778 to 851 (TLASAMTRTV…SQHYGNEGSQ (74 aa)) is disordered. Over residues 802 to 815 (TYQNHSTETPSQTA) the composition is skewed to polar residues. Asn-805 carries N-linked (GlcNAc...) asparagine glycosylation. Positions 824-839 (PRAPSTSPSTPSPATS) are enriched in low complexity. The N-linked (GlcNAc...) asparagine glycan is linked to Asn-840. Residues 840–851 (NHSQHYGNEGSQ) show a composition bias toward polar residues. Residues 859–881 (AVIGVIVPIVVIALLCMSGYLIW) form a helical membrane-spanning segment. At 882–996 (RNWKRKNTKS…ALSLEDDGLP (115 aa)) the chain is on the cytoplasmic side.

This sequence belongs to the LDLR family. As to quaternary structure, homooligomer. Interacts with VLDLR. Reelin associates with two or more receptor molecules. Interacts with DAB1 and JNK-interacting proteins. Interacts with SNX17. Interacts with PCSK9. Interacts with MDK; this interaction is calcium dependent. Interacts with CLU. Post-translationally, O-glycosylated. Some alternatively spliced isoforms lack the O-linked sugar domain. Undergoes sequential, furin and gamma-secretase dependent, proteolytic processing, resulting in the extracellular release of the entire ligand-binding domain as a soluble polypeptide and in the intracellular domain (ICD) release into the cytoplasm. The gamma-secretase-dependent proteolytical processing occurs after the bulk of the extracellular domain has been shed, in a furin-dependent manner, in alternatively spliced isoforms carrying the furin cleavage site. Hypoglycosylation (mainly hypo-O-glycosylation) leads to increased extracellular cleavage, which in turn results in accelerating release of the intracellular domain (ICD) by the gamma-secretase. The resulting receptor fragment is able to inhibit Reelin signaling and in particular the Reelin-induced DAB1 phosphorylation. In terms of processing, tyrosine phosphorylated upon apoE binding. Post-translationally, ubiquitinated by MYLIP leading to degradation. In terms of tissue distribution, expressed in neurons throughout the brain, with strong expression in pyramidal neurons of the hippocampus, granule cells of the dentate gyrus, cortical neurons and Purkinje cells of the cerebellum. Also expressed in the epithelium of the choroid plexus and of the blood vessels (apical expression), as well as in the epididymis.

The protein resides in the cell membrane. The protein localises to the secreted. Its function is as follows. Cell surface receptor for Reelin (RELN) and apolipoprotein E (apoE)-containing ligands. LRP8 participates in transmitting the extracellular Reelin signal to intracellular signaling processes, by binding to DAB1 on its cytoplasmic tail. Reelin acts via both the VLDL receptor (VLDLR) and LRP8 to regulate DAB1 tyrosine phosphorylation and microtubule function in neurons. LRP8 has higher affinity for Reelin than VLDLR. LRP8 is thus a key component of the Reelin pathway which governs neuronal layering of the forebrain during embryonic brain development. Binds the endoplasmic reticulum resident receptor-associated protein (RAP). Binds dimers of beta 2-glycoprotein I and may be involved in the suppression of platelet aggregation in the vasculature. Highly expressed in the initial segment of the epididymis, where it affects the functional expression of clusterin and phospholipid hydroperoxide glutathione peroxidase (PHGPx), two proteins required for sperm maturation. May also function as an endocytic receptor. Not required for endocytic uptake of SEPP1 in the kidney which is mediated by LRP2. Together with its ligand, apolipoprotein E (apoE), may indirectly play a role in the suppression of the innate immune response by controlling the survival of myeloid-derived suppressor cells. This Mus musculus (Mouse) protein is Low-density lipoprotein receptor-related protein 8 (Lrp8).